The following is a 425-amino-acid chain: Glutamyl-tRNA reductase (425 aa).

Residues Thr47–Arg50, Ser107, Glu112–Gln114, and Gln118 each bind substrate. Cys48 serves as the catalytic Nucleophile. Residue Gly187–Ala192 participates in NADP(+) binding.

This sequence belongs to the glutamyl-tRNA reductase family. In terms of assembly, homodimer.

The catalysed reaction is (S)-4-amino-5-oxopentanoate + tRNA(Glu) + NADP(+) = L-glutamyl-tRNA(Glu) + NADPH + H(+). It participates in porphyrin-containing compound metabolism; protoporphyrin-IX biosynthesis; 5-aminolevulinate from L-glutamyl-tRNA(Glu): step 1/2. Its pathway is porphyrin-containing compound metabolism; chlorophyll biosynthesis. Its function is as follows. Catalyzes the NADPH-dependent reduction of glutamyl-tRNA(Glu) to glutamate 1-semialdehyde (GSA). The protein is Glutamyl-tRNA reductase of Roseiflexus sp. (strain RS-1).